The following is a 545-amino-acid chain: Heparanase (545 aa).

Residues 1–37 (MLACRKPGLRPPLLLLLPLLGPLGPCSPGTPAAAAPA) form the signal peptide. Residue 64–66 (DAN) participates in heparan sulfate group binding. Positions 112–159 (PAFEERSYWLSQSNQDICKSGSIPSDVEEKLRLEWPFQEQVLLREQYQ) are cleaved as a propeptide — linker peptide. Cysteines 129 and 181 form a disulfide. Position 160 to 164 (160 to 164 (KKFTN)) interacts with heparan sulfate group. Asn164 and Asn219 each carry an N-linked (GlcNAc...) asparagine glycan. Catalysis depends on Glu227, which acts as the Proton donor. Heparan sulfate group contacts are provided by residues 272–282 (QPRRNTVKMLK), His298, and Arg305. Residues 290 to 419 (EVIDSVTWHH…LLFKKLVGNK (130 aa)) are required for heterodimerization with the heparanase 8 kDa subunit. Glu345 (nucleophile) is an active-site residue. Heparan sulfate group-binding positions include 350–352 (FGG) and 391–393 (GNY). Cysteines 439 and 544 form a disulfide. The N-linked (GlcNAc...) asparagine glycan is linked to Asn461. The segment at 529-545 (FSYGFFVIRNAKVAACI) is required for transferring proheparanase to the Golgi apparatus, secretion and subsequent enzyme activity and for enhancement of PKB/AKT1 phosphorylation.

It belongs to the glycosyl hydrolase 79 family. As to quaternary structure, heterodimer; heterodimer formation between the 8 kDa and the 50 kDa subunits is required for enzyme activity. Interacts with TF; the interaction, inhibited by heparin, enhances the generation of activated factor X and activates coagulation. Interacts with HRG; the interaction is enhanced at acidic pH, partially inhibits binding of HPSE to cell surface receptors and modulates its enzymatic activity. Interacts with SDC1; the interaction enhances the shedding of SDC1. Interacts with HPSE2. Post-translationally, proteolytically processed. The cleavage of the 65 kDa form leads to the generation of a linker peptide, and the 8 kDa and the 50 kDa products. The active form, the 8/50 kDa heterodimer, is resistant to degradation. Complete removal of the linker peptide appears to be a prerequisite to the complete activation of the enzyme. In terms of processing, N-glycosylated. Glycosylation of the 50 kDa subunit appears to be essential for its solubility. In terms of tissue distribution, highly expressed in placenta and weakly in the kidney, lung, spleen and uterus.

Its subcellular location is the lysosome membrane. The protein resides in the secreted. The protein localises to the nucleus. It catalyses the reaction endohydrolysis of (1-&gt;4)-beta-D-glycosidic bonds of heparan sulfate chains in heparan sulfate proteoglycan.. Its activity is regulated as follows. Inhibited by laminarin sulfate and, to a lower extent, by heparin, sulfamin and EDTA. Activated by calcium and magnesium. In terms of biological role, endoglycosidase that cleaves heparan sulfate proteoglycans (HSPGs) into heparan sulfate side chains and core proteoglycans. Participates in extracellular matrix (ECM) degradation and remodeling. Selectively cleaves the linkage between a glucuronic acid unit and an N-sulfo glucosamine unit carrying either a 3-O-sulfo or a 6-O-sulfo group. Can also cleave the linkage between a glucuronic acid unit and an N-sulfo glucosamine unit carrying a 2-O-sulfo group, but not linkages between a glucuronic acid unit and a 2-O-sulfated iduronic acid moiety. Essentially inactive at neutral pH but becomes active under acidic conditions such as during tumor invasion and in inflammatory processes. Facilitates cell migration associated with metastasis, wound healing and inflammation. Enhances shedding of syndecans. Acts as a procoagulant by enhancing the generation of activated factor X/F10 in the presence of tissue factor/TF and activated factor VII/F7. Independent of its enzymatic activity, increases cell adhesion to the extracellular matrix (ECM). Enhances AKT1/PKB phosphorylation, possibly via interaction with a lipid raft-resident receptor. Plays a role in the regulation of osteogenesis. Enhances angiogenesis through up-regulation of SRC-mediated activation of VEGF. Implicated in hair follicle inner root sheath differentiation and hair homeostasis. This is Heparanase (HPSE) from Bos taurus (Bovine).